Reading from the N-terminus, the 156-residue chain is MPRRREVPKRNILPDPKFHDKTVAKLINVLMLAGKKSIAESILYGALDIVAQKTNDEAVKVLKKSLDNIKPALEVKSRRVGGSTYQVPIEVRPDRRVSLAMRWLIKYSTLRSEKTMKDKLAGEILDAYNSRGAAVKKREDVHKMAEANRAFAHYRW.

Belongs to the universal ribosomal protein uS7 family. Part of the 30S ribosomal subunit. Contacts proteins S9 and S11.

Functionally, one of the primary rRNA binding proteins, it binds directly to 16S rRNA where it nucleates assembly of the head domain of the 30S subunit. Is located at the subunit interface close to the decoding center, probably blocks exit of the E-site tRNA. This chain is Small ribosomal subunit protein uS7, found in Pelobacter propionicus (strain DSM 2379 / NBRC 103807 / OttBd1).